A 486-amino-acid chain; its full sequence is Histidine--tRNA ligase, chloroplastic/mitochondrial (486 aa).

The protein belongs to the class-II aminoacyl-tRNA synthetase family.

Its subcellular location is the plastid. It is found in the chloroplast. It localises to the mitochondrion. It carries out the reaction tRNA(His) + L-histidine + ATP = L-histidyl-tRNA(His) + AMP + diphosphate + H(+). The polypeptide is Histidine--tRNA ligase, chloroplastic/mitochondrial (Arabidopsis thaliana (Mouse-ear cress)).